The chain runs to 163 residues: 6,7-dimethyl-8-ribityllumazine synthase 1 (163 aa).

5-amino-6-(D-ribitylamino)uracil-binding positions include Phe-27, 58 to 60 (ALE), and 87 to 89 (CVV). 92–93 (ET) contributes to the (2S)-2-hydroxy-3-oxobutyl phosphate binding site. The active-site Proton donor is the His-95. Asn-120 provides a ligand contact to 5-amino-6-(D-ribitylamino)uracil. Position 134 (Arg-134) interacts with (2S)-2-hydroxy-3-oxobutyl phosphate.

The protein belongs to the DMRL synthase family.

It carries out the reaction (2S)-2-hydroxy-3-oxobutyl phosphate + 5-amino-6-(D-ribitylamino)uracil = 6,7-dimethyl-8-(1-D-ribityl)lumazine + phosphate + 2 H2O + H(+). Its pathway is cofactor biosynthesis; riboflavin biosynthesis; riboflavin from 2-hydroxy-3-oxobutyl phosphate and 5-amino-6-(D-ribitylamino)uracil: step 1/2. Catalyzes the formation of 6,7-dimethyl-8-ribityllumazine by condensation of 5-amino-6-(D-ribitylamino)uracil with 3,4-dihydroxy-2-butanone 4-phosphate. This is the penultimate step in the biosynthesis of riboflavin. The chain is 6,7-dimethyl-8-ribityllumazine synthase 1 from Rhodopseudomonas palustris (strain ATCC BAA-98 / CGA009).